The sequence spans 274 residues: MPELPEVETVRRTLAELVIGKTIEQVDVGWAKMIKRPDDVDQFKWLLKGQTIRSMGRRGKFLLFHLDDYTLVSHLRMEGRYGLYQQNESVAKHTHVRFVFGDGTELRYQDVRKFGTMHLFQSGREQMEPPLAKLGVEPFSDQFSAKLLTERLSKTSRKIKSALLDQGIIVGLGNIYVDEALFRARIHPERLAKDVTVAEVKILHQAILNTLTEAVNLGGSSIKSYVNGQGEMGMFQQRLDVYGRKGETCRQCGTPITKTVVGGRGTHFCSVCQK.

Pro2 serves as the catalytic Schiff-base intermediate with DNA. Glu3 (proton donor) is an active-site residue. The Proton donor; for beta-elimination activity role is filled by Lys60. DNA contacts are provided by His93 and Arg112. An FPG-type zinc finger spans residues 240–274; it reads DVYGRKGETCRQCGTPITKTVVGGRGTHFCSVCQK. Residue Arg264 is the Proton donor; for delta-elimination activity of the active site.

Belongs to the FPG family. In terms of assembly, monomer. Zn(2+) serves as cofactor.

It carries out the reaction Hydrolysis of DNA containing ring-opened 7-methylguanine residues, releasing 2,6-diamino-4-hydroxy-5-(N-methyl)formamidopyrimidine.. The catalysed reaction is 2'-deoxyribonucleotide-(2'-deoxyribose 5'-phosphate)-2'-deoxyribonucleotide-DNA = a 3'-end 2'-deoxyribonucleotide-(2,3-dehydro-2,3-deoxyribose 5'-phosphate)-DNA + a 5'-end 5'-phospho-2'-deoxyribonucleoside-DNA + H(+). Functionally, involved in base excision repair of DNA damaged by oxidation or by mutagenic agents. Acts as a DNA glycosylase that recognizes and removes damaged bases. Has a preference for oxidized purines, such as 7,8-dihydro-8-oxoguanine (8-oxoG). Has AP (apurinic/apyrimidinic) lyase activity and introduces nicks in the DNA strand. Cleaves the DNA backbone by beta-delta elimination to generate a single-strand break at the site of the removed base with both 3'- and 5'-phosphates. The polypeptide is Formamidopyrimidine-DNA glycosylase (mutM) (Halalkalibacterium halodurans (strain ATCC BAA-125 / DSM 18197 / FERM 7344 / JCM 9153 / C-125) (Bacillus halodurans)).